The following is an 88-amino-acid chain: Small ribosomal subunit protein bS20 (88 aa).

A disordered region spans residues Met1–Ser23.

Belongs to the bacterial ribosomal protein bS20 family.

Functionally, binds directly to 16S ribosomal RNA. This chain is Small ribosomal subunit protein bS20, found in Teredinibacter turnerae (strain ATCC 39867 / T7901).